The following is a 222-amino-acid chain: Protein GrpE (222 aa).

The disordered stretch occupies residues 1–64; it reads MSDQNLGQGS…GEEILSDDDL (64 aa). Residues 16-44 are compositionally biased toward basic and acidic residues; sequence EEPIVRDKRRIDPETGKVREPQDLSHEEL. Positions 54–64 are enriched in acidic residues; that stretch reads QGEEILSDDDL.

It belongs to the GrpE family. As to quaternary structure, homodimer.

Its subcellular location is the cytoplasm. Its function is as follows. Participates actively in the response to hyperosmotic and heat shock by preventing the aggregation of stress-denatured proteins, in association with DnaK and GrpE. It is the nucleotide exchange factor for DnaK and may function as a thermosensor. Unfolded proteins bind initially to DnaJ; upon interaction with the DnaJ-bound protein, DnaK hydrolyzes its bound ATP, resulting in the formation of a stable complex. GrpE releases ADP from DnaK; ATP binding to DnaK triggers the release of the substrate protein, thus completing the reaction cycle. Several rounds of ATP-dependent interactions between DnaJ, DnaK and GrpE are required for fully efficient folding. The protein is Protein GrpE of Leifsonia xyli subsp. xyli (strain CTCB07).